A 1170-amino-acid polypeptide reads, in one-letter code: Type I restriction enzyme EcoKI endonuclease subunit (1170 aa).

A coiled-coil region spans residues 143–229; that stretch reads YHQEVLTLKQ…QERKAYHKEI (87 aa). The H-T-H motif DNA-binding region spans 431–450; the sequence is NQWFADNPGMSELGLRYYQE. Residues 458 to 639 enclose the Helicase ATP-binding domain; that stretch reads KAIVKGQQEI…GEPVYRYTYR (182 aa). 472–478 lines the ATP pocket; sequence ATGTGKT. The DEAH box signature appears at 574–577; the sequence is DEAH. A Helicase C-terminal domain is found at 714–879; it reads ELTNYLDPTG…TLVNEITDSE (166 aa).

Belongs to the HsdR family. In terms of assembly, the type I restriction/modification system is composed of three polypeptides R, M and S. The restriction enzyme has stoichiometry R(2)M(2)S(1). The methyltransferase is composed of M(2)S(1). As to quaternary structure, (Microbial infection) Interacts with Escherichia phage T7 protein Ocr; this interaction leads to the inhibition of the type I bifunctional endonuclease and methyltransferase restriction enzyme R.EcoKI composed of R(2)M(2)S(1). Upon purification after overexpression about one-third has the initiating methionine removed.

It carries out the reaction Endonucleolytic cleavage of DNA to give random double-stranded fragments with terminal 5'-phosphates, ATP is simultaneously hydrolyzed.. Its function is as follows. The subtype A restriction (R) subunit of a type I restriction enzyme that recognizes 5'-AACN(6)GTGC-3' and cleaves a random distance away. The R subunit is required for both endonuclease and ATPase activities but not for modification. Has endonucleolytic activity that requires Mg(2+), ATP and S-adenosyl-L-methionine (SAM); ATP can be replaced by dATP, no tested molecule could substitute for SAM. Generates double-stranded DNA with no nicks, by cutting one strand then the other within a few seconds. Cleaves only non-methylated DNA, hemi-methylated and fully methylated DNA are not substrates. After locating a non-methylated recognition site, the enzyme complex serves as a molecular motor that translocates DNA in an ATP-dependent manner until a collision occurs that triggers cleavage. The polypeptide is Type I restriction enzyme EcoKI endonuclease subunit (Escherichia coli (strain K12)).